A 428-amino-acid polypeptide reads, in one-letter code: Glucose-1-phosphate adenylyltransferase (428 aa).

Residues Y114, G179, 194–195 (EK), and S212 contribute to the alpha-D-glucose 1-phosphate site.

The protein belongs to the bacterial/plant glucose-1-phosphate adenylyltransferase family. In terms of assembly, homotetramer.

It catalyses the reaction alpha-D-glucose 1-phosphate + ATP + H(+) = ADP-alpha-D-glucose + diphosphate. It participates in glycan biosynthesis; glycogen biosynthesis. Its function is as follows. Involved in the biosynthesis of ADP-glucose, a building block required for the elongation reactions to produce glycogen. Catalyzes the reaction between ATP and alpha-D-glucose 1-phosphate (G1P) to produce pyrophosphate and ADP-Glc. This Yersinia pseudotuberculosis serotype O:1b (strain IP 31758) protein is Glucose-1-phosphate adenylyltransferase.